The primary structure comprises 348 residues: Rhodopsin (348 aa).

Met1 carries the post-translational modification N-acetylmethionine. Over 1 to 36 (MNGTEGPNFYVPFSNKTGVVRSPFEYPQYYLAEPWQ) the chain is Extracellular. N-linked (GlcNAc...) asparagine glycosylation is found at Asn2 and Asn15. A helical membrane pass occupies residues 37–61 (FSMLAAYMFLLIVLGFPINFLTLYV). The Cytoplasmic segment spans residues 62 to 73 (TVQHKKLRTPLN). A helical membrane pass occupies residues 74–96 (YILLNLAVADLFMVFGGFTTTLY). At 97-110 (TSLHGYFVFGPTGC) the chain is on the extracellular side. A disulfide bridge connects residues Cys110 and Cys187. Residues 111–133 (NVEGFFATLGGEIALWSLVVLAI) traverse the membrane as a helical segment. The 'Ionic lock' involved in activated form stabilization signature appears at 134-136 (ERY). Residues 134–152 (ERYVVVCKPMSNFRFGENH) are Cytoplasmic-facing. The chain crosses the membrane as a helical span at residues 153 to 173 (AIMGVAFTWVMALACAAPPLA). Residues 174 to 202 (GWSRYIPEGMQCSCGIDYYTLKPEVNNES) are Extracellular-facing. Position 201 (Glu201) interacts with Zn(2+). The chain crosses the membrane as a helical span at residues 203 to 224 (FVIYMFVVHFTIPMIVIFFCYG). Residues 225–252 (QLVFTVKEAAAQQQESATTQKAEKEVTR) lie on the Cytoplasmic side of the membrane. The chain crosses the membrane as a helical span at residues 253–274 (MVIIMVIAFLICWVPYASVAFY). Residues 275-286 (IFTHQGSNFGPI) lie on the Extracellular side of the membrane. Residue Gln279 participates in Zn(2+) binding. Residues 287-308 (FMTLPAFFAKSASIYNPVIYIM) form a helical membrane-spanning segment. Lys296 bears the N6-(retinylidene)lysine mark. Residues 309-348 (MNKQFRNCMLTTICCGKNPFAEEEGATTVSKTETSQVAPA) lie on the Cytoplasmic side of the membrane. 2 S-palmitoyl cysteine lipidation sites follow: Cys322 and Cys323. The segment at 330-348 (EEEGATTVSKTETSQVAPA) is interaction with SAG. Thr335 and Thr336 each carry phosphothreonine. At Ser338 the chain carries Phosphoserine. Phosphothreonine is present on residues Thr340 and Thr342. Position 343 is a phosphoserine (Ser343).

It belongs to the G-protein coupled receptor 1 family. Opsin subfamily. As to quaternary structure, homodimer. May form a complex composed of RHO, GRK1 and RCVRN in a Ca(2+)-dependent manner; RCVRN prevents the interaction between GRK1 and RHO. Interacts with GRK1. Interacts (phosphorylated form) with SAG. Interacts with GNAT1. Interacts with GNAT3. SAG and G-proteins compete for a common binding site. Interacts with PRCD; the interaction promotes PRCD stability. Forms a complex with ASAP1 and ARF4. Forms a complex with ASAP1, RAB11A, Rabin8/RAB3IP, ARF4 and RAB11FIP3; the complex regulates Golgi-to-cilia rhodopsin/RHO transport in photoreceptors. Phosphorylated on some or all of the serine and threonine residues present in the C-terminal region. Post-translationally, contains one covalently linked retinal chromophore. Upon light absorption, the covalently bound 11-cis-retinal is converted to all-trans-retinal. After hydrolysis of the Schiff base and release of the covalently bound all-trans-retinal, active rhodopsin is regenerated by binding of a fresh molecule of 11-cis-retinal.

Its subcellular location is the membrane. It localises to the cell projection. The protein localises to the cilium. The protein resides in the photoreceptor outer segment. In terms of biological role, photoreceptor required for image-forming vision at low light intensity. Required for photoreceptor cell viability after birth. Light-induced isomerization of 11-cis to all-trans retinal triggers a conformational change that activates signaling via G-proteins. Subsequent receptor phosphorylation mediates displacement of the bound G-protein alpha subunit by the arrestin SAG and terminates signaling. This Trichechus manatus (Caribbean manatee) protein is Rhodopsin (RHO).